The chain runs to 396 residues: dTDP-epi-vancosaminyltransferase (396 aa).

Ser10–Gly12 provides a ligand contact to dTDP-beta-L-4-epi-vancosamine. Residues Asp127, Gln133, Tyr141, and Tyr169 each contribute to the devancoaminyl-vancomycin site. DTDP-beta-L-4-epi-vancosamine is bound by residues Arg207, Ser230, Glu277–Val278, and His293–Thr298.

Belongs to the glycosyltransferase 28 family.

It catalyses the reaction dTDP-beta-L-4-epi-vancosamine + devancoaminyl-vancomycin = chloroorienticin B + dTDP + H(+). It functions in the pathway antibiotic biosynthesis; vancomycin biosynthesis. Catalyzes the attachment of 4-epi-vancosamine from a TDP donor to the beta-OH-Tyr-6 of the aglycone cosubstrate in the biosynthesis of glycopeptide antibiotic chloroeremomycin, a member of the vancomycin group of antibiotics. Strongly prefers devancoaminyl-vancomycin (DVV) as substrate rather than the heptapeptide vancomycin aglycone (AGV). Acts downstream of GtfB. The sequence is that of dTDP-epi-vancosaminyltransferase (gtfA) from Amycolatopsis orientalis (Nocardia orientalis).